A 327-amino-acid chain; its full sequence is GTPase Obg (327 aa).

An Obg domain is found at 3–160; the sequence is NKFTDFIKIY…FIFVLELKIL (158 aa). An OBG-type G domain is found at 161–327; sequence ADVGLIGLPN…LIYYICNILS (167 aa). Residues 167–174, 192–196, 214–217, 281–284, and 308–310 each bind GTP; these read GLPNSGKS, FTTLN, DIPG, SKSD, and SSF. Mg(2+) is bound by residues Ser-174 and Thr-194.

It belongs to the TRAFAC class OBG-HflX-like GTPase superfamily. OBG GTPase family. Monomer. Requires Mg(2+) as cofactor.

The protein resides in the cytoplasm. Its function is as follows. An essential GTPase which binds GTP, GDP and possibly (p)ppGpp with moderate affinity, with high nucleotide exchange rates and a fairly low GTP hydrolysis rate. Plays a role in control of the cell cycle, stress response, ribosome biogenesis and in those bacteria that undergo differentiation, in morphogenesis control. This chain is GTPase Obg, found in Karelsulcia muelleri (strain GWSS) (Sulcia muelleri).